Here is a 212-residue protein sequence, read N- to C-terminus: Ribonuclease HII (212 aa).

Residues 1 to 206 form the RNase H type-2 domain; the sequence is MILVGIDEAG…LQDIAPNYYI (206 aa). Residues D7, E8, and D104 each coordinate a divalent metal cation.

Belongs to the RNase HII family. It depends on Mn(2+) as a cofactor. Requires Mg(2+) as cofactor.

It is found in the cytoplasm. It catalyses the reaction Endonucleolytic cleavage to 5'-phosphomonoester.. Functionally, endonuclease that specifically degrades the RNA of RNA-DNA hybrids. The polypeptide is Ribonuclease HII (Sulfolobus acidocaldarius (strain ATCC 33909 / DSM 639 / JCM 8929 / NBRC 15157 / NCIMB 11770)).